We begin with the raw amino-acid sequence, 545 residues long: Glucose-6-phosphate isomerase (545 aa).

E351 acts as the Proton donor in catalysis. Active-site residues include H382 and K510.

This sequence belongs to the GPI family.

It localises to the cytoplasm. It catalyses the reaction alpha-D-glucose 6-phosphate = beta-D-fructose 6-phosphate. Its pathway is carbohydrate biosynthesis; gluconeogenesis. It participates in carbohydrate degradation; glycolysis; D-glyceraldehyde 3-phosphate and glycerone phosphate from D-glucose: step 2/4. Catalyzes the reversible isomerization of glucose-6-phosphate to fructose-6-phosphate. This Shewanella frigidimarina (strain NCIMB 400) protein is Glucose-6-phosphate isomerase.